Here is a 336-residue protein sequence, read N- to C-terminus: Anthranilate phosphoribosyltransferase (336 aa).

Residues Gly79, 82 to 83 (GD), Thr87, 89 to 92 (NIST), 107 to 115 (KHGNRCVSS), and Ala119 contribute to the 5-phospho-alpha-D-ribose 1-diphosphate site. Residue Gly79 coordinates anthranilate. Ser91 contributes to the Mg(2+) binding site. Asn110 provides a ligand contact to anthranilate. Arg165 lines the anthranilate pocket. Mg(2+) contacts are provided by Asp224 and Glu225.

This sequence belongs to the anthranilate phosphoribosyltransferase family. As to quaternary structure, homodimer. Mg(2+) is required as a cofactor.

The catalysed reaction is N-(5-phospho-beta-D-ribosyl)anthranilate + diphosphate = 5-phospho-alpha-D-ribose 1-diphosphate + anthranilate. It participates in amino-acid biosynthesis; L-tryptophan biosynthesis; L-tryptophan from chorismate: step 2/5. Its function is as follows. Catalyzes the transfer of the phosphoribosyl group of 5-phosphorylribose-1-pyrophosphate (PRPP) to anthranilate to yield N-(5'-phosphoribosyl)-anthranilate (PRA). The chain is Anthranilate phosphoribosyltransferase from Lachnoclostridium phytofermentans (strain ATCC 700394 / DSM 18823 / ISDg) (Clostridium phytofermentans).